A 537-amino-acid chain; its full sequence is Lysosomal cobalamin transport escort protein LMBD1 (537 aa).

Over 1–7 (MAAAAAE) the chain is Extracellular. A helical transmembrane segment spans residues 8–28 (LVIGWCIFGLLLLAILAFCWV). The Cytoplasmic segment spans residues 29 to 47 (YVRKYQSQRESEVVSTVTA). A helical membrane pass occupies residues 48-68 (IFSLAVALITSALLPVDIFLV). Topologically, residues 69-97 (SYMKNQNGTFKDWADANVTVQIENTVLYG) are extracellular. Residues Asn-75 and Asn-85 are each glycosylated (N-linked (GlcNAc...) asparagine). A helical membrane pass occupies residues 98-118 (YYTLYSVILFCVFFWIPFVYF). Residues 119-141 (YYEEKDEDDASKCTQIKTALKYT) are Cytoplasmic-facing. Residues 142 to 162 (LGFVVICALLLLVGAFVPLHL) traverse the membrane as a helical segment. Over 163-185 (PNNNNSTEWEKVKLLFEDLGTGQ) the chain is Extracellular. Residues Asn-166 and Asn-167 are each glycosylated (N-linked (GlcNAc...) asparagine). A helical transmembrane segment spans residues 186–206 (GLAALSFSISSLTLIGMLAAI). The Cytoplasmic segment spans residues 207–302 (TYTAYGMSAL…KFCGALRPLK (96 aa)). Residues 229 to 232 (YERL) carry the YERL motif; mediates interaction with adapter protein complex 2 and is essential for its function in clathrin-mediated endocytosis of INSR motif. Thr-235 is subject to Phosphothreonine. The WTKF motif; mediates interaction with adapter protein complex 2 and is essential for its function in clathrin-mediated endocytosis of INSR signature appears at 291 to 294 (WTKF). The chain crosses the membrane as a helical span at residues 303–323 (IIWGIFFILVALLFVISLFLS). At 324-361 (NLDKALHSAGIDSGFIIFGTNLSNPLNMLLPLLQTVFP) the chain is on the extracellular side. N-linked (GlcNAc...) asparagine glycosylation occurs at Asn-344. Residues 362–382 (LDYILITIIIMYFIFTSMAGI) traverse the membrane as a helical segment. At 383–405 (RNIGIWFFWIRLYKIRRGRTRPQ) the chain is on the cytoplasmic side. The helical transmembrane segment at 406–426 (ALLFLCMILLLIVLHTSYMIY) threads the bilayer. At 427–483 (SLAPQYVMYGSQNYLIESNITSDAHKGNSTLAVPKRCDADAPKDQCTVTRTYIFLHK) the chain is on the extracellular side. N-linked (GlcNAc...) asparagine glycosylation is found at Asn-445 and Asn-454. A helical membrane pass occupies residues 484–504 (FWFFSAAYYFGNWAFLVVFLI). Residues 505 to 537 (GLIVSCCKGKKSVIEGVDEDSDLSDDEPSAYSA) lie on the Cytoplasmic side of the membrane. A phosphoserine mark is found at Ser-525 and Ser-528.

This sequence belongs to the LIMR family. LMBRD1 subfamily. Interacts with ABCD4; this interaction induces the translocation of ABCD4 from the endoplasmic reticulum to the lysosome. Interacts with ABCD4 and MMACHC; this interaction ensures the transport of cobalamin from the lysosome to the cytoplasm. Interacts with INSR, adapter protein complex 2 and clathrin heavy chain. N-glycosylated.

The protein localises to the endoplasmic reticulum membrane. Its subcellular location is the lysosome membrane. The protein resides in the cell membrane. It localises to the cytoplasmic vesicle. It is found in the clathrin-coated vesicle. Its function is as follows. Lysosomal membrane chaperone required to export cobalamin (vitamin B12) from the lysosome to the cytosol, allowing its conversion to cofactors. Targets ABCD4 transporter from the endoplasmic reticulum to the lysosome. Then forms a complex with lysosomal ABCD4 and cytoplasmic MMACHC to transport cobalamin across the lysosomal membrane. Acts as an adapter protein which plays an important role in mediating and regulating the internalization of the insulin receptor (INSR). Involved in clathrin-mediated endocytosis of INSR via its interaction with adapter protein complex 2. Essential for the initiation of gastrulation and early formation of mesoderm structures during embryogenesis. The protein is Lysosomal cobalamin transport escort protein LMBD1 of Mus musculus (Mouse).